The sequence spans 119 residues: Large ribosomal subunit protein uL18 (119 aa).

A disordered region spans residues 1–25 (MITKIDKNKVRKKRHARVRSKISGT). The span at 9–20 (KVRKKRHARVRS) shows a compositional bias: basic residues.

This sequence belongs to the universal ribosomal protein uL18 family. As to quaternary structure, part of the 50S ribosomal subunit; part of the 5S rRNA/L5/L18/L25 subcomplex. Contacts the 5S and 23S rRNAs.

In terms of biological role, this is one of the proteins that bind and probably mediate the attachment of the 5S RNA into the large ribosomal subunit, where it forms part of the central protuberance. This chain is Large ribosomal subunit protein uL18, found in Listeria monocytogenes serotype 4b (strain CLIP80459).